The following is a 613-amino-acid chain: MPKLRSATTTHGRNMAGARALWRATGMTDEDFGKPIIAVVNSFTQFVPGHVHLKDLGQLVAREIEAAGGVAKEFNTIAVDDGIAMGHGGMLYSLPSRELIADSVEYMVNAHCADAMVCISNCDKITPGMLMAALRINIPVIFVSGGPMEAGKTKLSDQIIKLDLVDAMIQGADPKVSDAQSEQVERSACPTCGSCSGMFTANSMNCLTEALGLSQPGNGSMLATHADREQLFKLAGQRIVTLAKRYYQQDDESALPRNIATKAAFENAMALDIAMGGSTNTVLHLLAAAQEAGVDFTMADIDRMSRKVPQLCKVAPSTQKYHMEDVHRAGGVVAILGQLEKAGLVHGDTRTVLGGSLAELLNEYDVSRQPSQEVVDFYRAGPAGIRTTKAFSQDCRWPELDVDRAEGCIRSLEHAYSLEGGLAVLSGNLALDGAIVKTAGVDDEHLCFRGPARVFESQDTAVAGILDGTVKAGEVVVIRYEGPKGGPGMQEMLYPTTYLKSMGLGKQCALITDGRFSGGTSGLSIGHVSPEAASGGTIGLVADGDIININIPARSMVLEVADSVLAARRVAVEARGWKPLDRQRQVSFALRAYAMLATSADKGAVRDRSKLEE.

Mg(2+) is bound at residue aspartate 81. Residue cysteine 122 coordinates [2Fe-2S] cluster. 2 residues coordinate Mg(2+): aspartate 123 and lysine 124. Lysine 124 is subject to N6-carboxylysine. Cysteine 195 contacts [2Fe-2S] cluster. Glutamate 491 contacts Mg(2+). Serine 517 functions as the Proton acceptor in the catalytic mechanism.

It belongs to the IlvD/Edd family. As to quaternary structure, homodimer. [2Fe-2S] cluster serves as cofactor. Mg(2+) is required as a cofactor.

It catalyses the reaction (2R)-2,3-dihydroxy-3-methylbutanoate = 3-methyl-2-oxobutanoate + H2O. The catalysed reaction is (2R,3R)-2,3-dihydroxy-3-methylpentanoate = (S)-3-methyl-2-oxopentanoate + H2O. The protein operates within amino-acid biosynthesis; L-isoleucine biosynthesis; L-isoleucine from 2-oxobutanoate: step 3/4. It functions in the pathway amino-acid biosynthesis; L-valine biosynthesis; L-valine from pyruvate: step 3/4. Functionally, functions in the biosynthesis of branched-chain amino acids. Catalyzes the dehydration of (2R,3R)-2,3-dihydroxy-3-methylpentanoate (2,3-dihydroxy-3-methylvalerate) into 2-oxo-3-methylpentanoate (2-oxo-3-methylvalerate) and of (2R)-2,3-dihydroxy-3-methylbutanoate (2,3-dihydroxyisovalerate) into 2-oxo-3-methylbutanoate (2-oxoisovalerate), the penultimate precursor to L-isoleucine and L-valine, respectively. The protein is Dihydroxy-acid dehydratase of Aeromonas salmonicida (strain A449).